The chain runs to 397 residues: Acetate kinase (397 aa).

Residue Asn8 coordinates Mg(2+). ATP is bound at residue Lys15. Arg89 is a binding site for substrate. Catalysis depends on Asp146, which acts as the Proton donor/acceptor. ATP-binding positions include 206–210 (HLGNG), 280–282 (DMR), and 328–332 (GVGEN). Glu382 contributes to the Mg(2+) binding site.

The protein belongs to the acetokinase family. Homodimer. Requires Mg(2+) as cofactor. Mn(2+) is required as a cofactor.

It localises to the cytoplasm. It catalyses the reaction acetate + ATP = acetyl phosphate + ADP. It functions in the pathway metabolic intermediate biosynthesis; acetyl-CoA biosynthesis; acetyl-CoA from acetate: step 1/2. Its function is as follows. Catalyzes the formation of acetyl phosphate from acetate and ATP. Can also catalyze the reverse reaction. This chain is Acetate kinase, found in Leifsonia xyli subsp. xyli (strain CTCB07).